A 193-amino-acid polypeptide reads, in one-letter code: MTDYLLLFVGTVLVNNFVLVKFLGLCPFMGVSKKLETAMGMGLATTFVMTLTSICAWLIDTWILIPLNLIYLRTLAFILVIAVVVQFTEMVVRKTSPVLYRLLGIFLPLITTNCAVLGVALLNINLGHNFLQSALYGFSAAVGFSLVMVLFAAIRERLAVADVPAPFRGNAIALITAGLMSLAFMGFSGLVKL.

6 helical membrane-spanning segments follow: residues 5 to 25 (LLLF…FLGL), 39 to 59 (MGMG…AWLI), 63 to 83 (ILIP…VIAV), 102 to 122 (LLGI…VALL), 134 to 154 (ALYG…FAAI), and 171 to 191 (AIAL…SGLV).

Belongs to the NqrDE/RnfAE family. In terms of assembly, the complex is composed of six subunits: RsxA, RsxB, RsxC, RsxD, RsxE and RsxG.

The protein resides in the cell inner membrane. In terms of biological role, part of a membrane-bound complex that couples electron transfer with translocation of ions across the membrane. Required to maintain the reduced state of SoxR. This is Ion-translocating oxidoreductase complex subunit A from Shigella flexneri serotype 5b (strain 8401).